The sequence spans 392 residues: Phospho-N-acetylmuramoyl-pentapeptide-transferase (392 aa).

Transmembrane regions (helical) follow at residues 29-49, 76-96, 100-120, 137-157, 193-213, 225-245, 262-282, 289-309, 314-334, and 369-389; these read AVMAALTALLIGLLAGPFVIR, TMGGVLILMSIGISTLLWFDL, FVWIVLLVTLGFGAIGWADDW, YLWQSLIGLVAALYLVFSISE, ISYPLGVFGFVILTYLVIVGS, GLAIMPVVMVGSALGVFAYVT, SGELLIFCSAMAGAGLAFLWF, VFMGDVGALALGAALGTIAVI, IVLAIMGGIFVVEALSVMMQV, and QVVVRFWIITMLLCLVGLSTL.

It belongs to the glycosyltransferase 4 family. MraY subfamily. It depends on Mg(2+) as a cofactor.

The protein localises to the cell inner membrane. The catalysed reaction is UDP-N-acetyl-alpha-D-muramoyl-L-alanyl-gamma-D-glutamyl-meso-2,6-diaminopimeloyl-D-alanyl-D-alanine + di-trans,octa-cis-undecaprenyl phosphate = di-trans,octa-cis-undecaprenyl diphospho-N-acetyl-alpha-D-muramoyl-L-alanyl-D-glutamyl-meso-2,6-diaminopimeloyl-D-alanyl-D-alanine + UMP. Its pathway is cell wall biogenesis; peptidoglycan biosynthesis. In terms of biological role, catalyzes the initial step of the lipid cycle reactions in the biosynthesis of the cell wall peptidoglycan: transfers peptidoglycan precursor phospho-MurNAc-pentapeptide from UDP-MurNAc-pentapeptide onto the lipid carrier undecaprenyl phosphate, yielding undecaprenyl-pyrophosphoryl-MurNAc-pentapeptide, known as lipid I. The sequence is that of Phospho-N-acetylmuramoyl-pentapeptide-transferase from Polaromonas sp. (strain JS666 / ATCC BAA-500).